A 475-amino-acid chain; its full sequence is Ribulose bisphosphate carboxylase large chain (475 aa).

A propeptide spanning residues 1–2 (MS) is cleaved from the precursor. Pro-3 is subject to N-acetylproline. Lys-14 is subject to N6,N6,N6-trimethyllysine. Residues Asn-123 and Thr-173 each coordinate substrate. Residue Lys-175 is the Proton acceptor of the active site. Lys-177 contributes to the substrate binding site. Mg(2+)-binding residues include Lys-201, Asp-203, and Glu-204. Position 201 is an N6-carboxylysine (Lys-201). Residue His-294 is the Proton acceptor of the active site. Substrate-binding residues include Arg-295, His-327, and Ser-379.

It belongs to the RuBisCO large chain family. Type I subfamily. Heterohexadecamer of 8 large chains and 8 small chains; disulfide-linked. The disulfide link is formed within the large subunit homodimers. The cofactor is Mg(2+). Post-translationally, the disulfide bond which can form in the large chain dimeric partners within the hexadecamer appears to be associated with oxidative stress and protein turnover.

The protein localises to the plastid. The protein resides in the chloroplast. It catalyses the reaction 2 (2R)-3-phosphoglycerate + 2 H(+) = D-ribulose 1,5-bisphosphate + CO2 + H2O. The catalysed reaction is D-ribulose 1,5-bisphosphate + O2 = 2-phosphoglycolate + (2R)-3-phosphoglycerate + 2 H(+). In terms of biological role, ruBisCO catalyzes two reactions: the carboxylation of D-ribulose 1,5-bisphosphate, the primary event in carbon dioxide fixation, as well as the oxidative fragmentation of the pentose substrate in the photorespiration process. Both reactions occur simultaneously and in competition at the same active site. This Clarkia xantiana (Gunsight clarkia) protein is Ribulose bisphosphate carboxylase large chain.